Reading from the N-terminus, the 544-residue chain is Terpene synthase 9 (544 aa).

The Mg(2+) site is built by aspartate 296, aspartate 300, and glutamate 449. The DDXXD motif motif lies at 296-300 (DDTFD).

Belongs to the terpene synthase family. Tpsa subfamily. Mg(2+) is required as a cofactor. The cofactor is Mn(2+).

It carries out the reaction (2E,6E)-farnesyl diphosphate = (1E,4E)-germacrene B + diphosphate. The enzyme catalyses (2E)-geranyl diphosphate = terpinolene + diphosphate. It catalyses the reaction (2E)-geranyl diphosphate = limonene + diphosphate. The catalysed reaction is (2E)-geranyl diphosphate = beta-myrcene + diphosphate. It carries out the reaction (2Z,6Z)-farnesyl diphosphate = germacrene A + diphosphate. The enzyme catalyses (2Z,6Z)-farnesyl diphosphate = alpha-humulene + diphosphate. It participates in secondary metabolite biosynthesis; terpenoid biosynthesis. Its function is as follows. Sesquiterpene synthase involved in the biosynthesis of volatile compounds. Mediates the conversion of (2E,6E)-farnesyl diphosphate (FPP) into (1E,4E)-germacrene B, but also smaller amounts of germacrene A and C, and of (2Z,6Z)-farnesyl diphosphate ((ZZ)-FPP) into alpha-humulene, germacrene A and germacrene B. Can act with a low efficiency as a monoterpene synthase with geranyl diphosphate (GPP) as substrate, thus producing beta-myrcene, limonene and terpinolene. This chain is Terpene synthase 9, found in Solanum habrochaites (Wild tomato).